We begin with the raw amino-acid sequence, 566 residues long: Ubiquitin carboxyl-terminal hydrolase 21 (566 aa).

Composition is skewed to basic and acidic residues over residues 1 to 14 (MPQASEHRLGRTRE) and 58 to 70 (PPDERLKKLELGR). 2 disordered regions span residues 1–103 (MPQA…LPLP) and 146–169 (PEPPTLRRSTSLRRLGGFPGPPTL). 2 stretches are compositionally biased toward low complexity: residues 71 to 81 (GRTSGSRPRGP) and 151 to 160 (LRRSTSLRRL). Positions 134 to 152 (ELGAALSRLALRPEPPTLR) match the Nuclear export signal motif. Residues 212-559 (VGLRNLGNTC…EGYVLFYQLM (348 aa)) form the USP domain. Cys221 serves as the catalytic Nucleophile. The disordered stretch occupies residues 324-349 (APPILASGPVPSPPRRGGGALHEEPE). Residues Cys385, Cys388, Cys438, and Cys441 each contribute to the Zn(2+) site. The active-site Proton acceptor is His519.

This sequence belongs to the peptidase C19 family. USP21 subfamily. As to quaternary structure, interacts with BEND3.

The protein localises to the cytoplasm. Its subcellular location is the nucleus. It catalyses the reaction Thiol-dependent hydrolysis of ester, thioester, amide, peptide and isopeptide bonds formed by the C-terminal Gly of ubiquitin (a 76-residue protein attached to proteins as an intracellular targeting signal).. Deubiquitinates histone H2A, a specific tag for epigenetic transcriptional repression, thereby acting as a coactivator. Deubiquitination of histone H2A releaves the repression of di- and trimethylation of histone H3 at 'Lys-4', resulting in regulation of transcriptional initiation. Regulates gene expression via histone H2A deubiquitination. Deubiquitinates BAZ2A/TIP5 leading to its stabilization. Also capable of removing NEDD8 from NEDD8 conjugates but has no effect on Sentrin-1 conjugates. Also acts as a negative regulator of the ribosome quality control (RQC) by mediating deubiquitination of 40S ribosomal proteins RPS10/eS10 and RPS20/uS10, thereby antagonizing ZNF598-mediated 40S ubiquitination. The chain is Ubiquitin carboxyl-terminal hydrolase 21 from Mus musculus (Mouse).